A 576-amino-acid chain; its full sequence is Proline--tRNA ligase (576 aa).

Belongs to the class-II aminoacyl-tRNA synthetase family. ProS type 1 subfamily. As to quaternary structure, homodimer.

Its subcellular location is the cytoplasm. It carries out the reaction tRNA(Pro) + L-proline + ATP = L-prolyl-tRNA(Pro) + AMP + diphosphate. Its function is as follows. Catalyzes the attachment of proline to tRNA(Pro) in a two-step reaction: proline is first activated by ATP to form Pro-AMP and then transferred to the acceptor end of tRNA(Pro). As ProRS can inadvertently accommodate and process non-cognate amino acids such as alanine and cysteine, to avoid such errors it has two additional distinct editing activities against alanine. One activity is designated as 'pretransfer' editing and involves the tRNA(Pro)-independent hydrolysis of activated Ala-AMP. The other activity is designated 'posttransfer' editing and involves deacylation of mischarged Ala-tRNA(Pro). The misacylated Cys-tRNA(Pro) is not edited by ProRS. The chain is Proline--tRNA ligase from Magnetococcus marinus (strain ATCC BAA-1437 / JCM 17883 / MC-1).